Reading from the N-terminus, the 346-residue chain is Short-chain dehydrogenase/reductase bet4 (346 aa).

Residues 1–35 are disordered; sequence MTPAKAPSHAKKPEAGSQPISSMWTQMFPPKPTYT. NADP(+) is bound by residues V56, K80, D105, and N132. S191 functions as the Proton donor in the catalytic mechanism. Residues Y222 and K226 each coordinate NADP(+). Y222 functions as the Proton acceptor in the catalytic mechanism. K226 acts as the Lowers pKa of active site Tyr in catalysis.

This sequence belongs to the short-chain dehydrogenases/reductases (SDR) family.

It catalyses the reaction dehydroprobetaenone I + AH2 = probetaenone I + A. It functions in the pathway mycotoxin biosynthesis. In terms of biological role, short-chain dehydrogenase/reductase; part of the gene cluster that mediates the biosynthesis of betaenones, phytotoxic polyketides involved in leaf spot disease in sugar beets. The first step of the pathway is the synthesis of dehydroprobetaenone I by the polyketide synthase bet1 and the enoyl reductase bet3 via condensation of one acetyl-CoA starter unit with 7 malonyl-CoA units and 5 methylations. The C-terminal reductase (R) domain of bet1 catalyzes the reductive release of the polyketide chain. Because bet1 lacks a designated enoylreductase (ER) domain, the required activity is provided the enoyl reductase bet3. The short-chain dehydrogenase/reductase bet4 then catalyzes reduction of dehydroprobetaenone I to probetaenone I. The cytochrome P450 monooxygenase bet2 catalyzes successive epoxidation, oxidation (resulting from epoxide opening) and hydroxylation to install a tertiary alcohol in the decaline ring to yield betaenone C from dehydroprobetaenone I and betaenone B from probetaenone I. The FAD-linked oxidoreductase (orf1) is probably responsible for the conversion of betaenone C to betaenone A via an intramolecular aldol reaction between C-1 and C-17 to form the bridged tricyclic system in betaenone A. The chain is Short-chain dehydrogenase/reductase bet4 from Neocamarosporium betae (Beet black rot fungus).